A 199-amino-acid polypeptide reads, in one-letter code: Small ribosomal subunit protein uS4B (199 aa).

The region spanning 88-151 (CRLDNLVYRT…RKNKIFIDNF (64 aa)) is the S4 RNA-binding domain.

It belongs to the universal ribosomal protein uS4 family. Part of the 30S ribosomal subunit. Contacts protein S5. The interaction surface between S4 and S5 is involved in control of translational fidelity.

Its function is as follows. One of the primary rRNA binding proteins, it binds directly to 16S rRNA where it nucleates assembly of the body of the 30S subunit. With S5 and S12 plays an important role in translational accuracy. The protein is Small ribosomal subunit protein uS4B of Alkaliphilus metalliredigens (strain QYMF).